The following is a 132-amino-acid chain: Binder of sperm protein homolog 1 (132 aa).

The N-terminal stretch at 1–17 (MGSLMLLFVETTRNSSA) is a signal peptide. 2 consecutive Fibronectin type-II domains span residues 40 to 84 (VTDG…FCSA) and 85 to 132 (EDFA…KYCE). Disulfide bonds link Cys-45/Cys-69, Cys-59/Cys-82, Cys-90/Cys-116, and Cys-104/Cys-131. The N-linked (GlcNAc...) asparagine glycan is linked to Asn-53.

Belongs to the seminal plasma protein family. As to expression, expressed only in the epididymis.

The protein localises to the secreted. Functionally, binds sperm in vitro and promotes sperm capacitation. Specifically promotes capacitation induced by high density lipoproteins (HDLs). Also binds heparin, phospholipid liposomes, and weakly to gelatin. Does not bind chondroitin sulfate B. The protein is Binder of sperm protein homolog 1 (BSPH1) of Homo sapiens (Human).